A 254-amino-acid polypeptide reads, in one-letter code: Aspartate/glutamate leucyltransferase (254 aa).

Belongs to the R-transferase family. Bpt subfamily.

Its subcellular location is the cytoplasm. The catalysed reaction is N-terminal L-glutamyl-[protein] + L-leucyl-tRNA(Leu) = N-terminal L-leucyl-L-glutamyl-[protein] + tRNA(Leu) + H(+). The enzyme catalyses N-terminal L-aspartyl-[protein] + L-leucyl-tRNA(Leu) = N-terminal L-leucyl-L-aspartyl-[protein] + tRNA(Leu) + H(+). Functions in the N-end rule pathway of protein degradation where it conjugates Leu from its aminoacyl-tRNA to the N-termini of proteins containing an N-terminal aspartate or glutamate. This Maricaulis maris (strain MCS10) (Caulobacter maris) protein is Aspartate/glutamate leucyltransferase.